The following is a 151-amino-acid chain: Large ribosomal subunit protein uL22 (151 aa).

The span at 1–18 (MARINYSINADPENTSKA) shows a compositional bias: polar residues. The disordered stretch occupies residues 1–23 (MARINYSINADPENTSKAMGSEL).

The protein belongs to the universal ribosomal protein uL22 family. As to quaternary structure, part of the 50S ribosomal subunit.

Its function is as follows. This protein binds specifically to 23S rRNA. It makes multiple contacts with different domains of the 23S rRNA in the assembled 50S subunit and ribosome. In terms of biological role, the globular domain of the protein is located near the polypeptide exit tunnel on the outside of the subunit, while an extended beta-hairpin is found that lines the wall of the exit tunnel in the center of the 70S ribosome. In Methanosarcina mazei (strain ATCC BAA-159 / DSM 3647 / Goe1 / Go1 / JCM 11833 / OCM 88) (Methanosarcina frisia), this protein is Large ribosomal subunit protein uL22.